We begin with the raw amino-acid sequence, 635 residues long: Dual specificity protein kinase zak2 (635 aa).

Protein kinase domains are found at residues 9 to 249 and 299 to 585; these read WEEI…HRLI and NKDD…QIYF. ATP-binding positions include 15–23 and lysine 45; that span reads IGSCNSKSR. Aspartate 124 functions as the Proton acceptor in the catalytic mechanism. Residues 305 to 313 and lysine 326 each bind ATP; that span reads GGDGFFSVV. Aspartate 427 (proton acceptor) is an active-site residue.

This sequence in the N-terminal section; belongs to the protein kinase superfamily. Ser/Thr protein kinase family. In the C-terminal section; belongs to the protein kinase superfamily. TKL Tyr protein kinase family. In terms of processing, C-terminal tyrosine kinase domain is capable of autophosphorylation, in vitro. As to expression, zakA and zak2 are coexpressed in prestalk cell population, zakA is enriched in pstB populations and zak1 in pstA populations. ZakA and zak2 are coexpressed in prespore cells, zakA expression levels are 10 fold higher than zak2.

It catalyses the reaction L-seryl-[protein] + ATP = O-phospho-L-seryl-[protein] + ADP + H(+). The catalysed reaction is L-threonyl-[protein] + ATP = O-phospho-L-threonyl-[protein] + ADP + H(+). The enzyme catalyses L-tyrosyl-[protein] + ATP = O-phospho-L-tyrosyl-[protein] + ADP + H(+). Its function is as follows. Positive regulator of gsk3/gskA activity required for cell pattern formation and a downstream effector of carC. The kinases, gsk3/gskA, zakA and zak2, form part of a signaling pathway that responds to extracellular cyclic AMP. The pathway has a role in transcriptional regulation; required to direct prespore/spore fates during development. Zak2 negatively regulates prestalk differentiation by regulating expression of ecmA. Phosphorylates Y-214 of gsk3/gskA, in vitro. This Dictyostelium discoideum (Social amoeba) protein is Dual specificity protein kinase zak2 (zak2).